The following is a 152-amino-acid chain: Large-conductance mechanosensitive channel (152 aa).

3 helical membrane passes run 14 to 34 (VVDM…VKSL), 39 to 59 (LMPG…FLVI), and 85 to 105 (GLFI…FLVI).

This sequence belongs to the MscL family. Homopentamer.

The protein localises to the cell inner membrane. Functionally, channel that opens in response to stretch forces in the membrane lipid bilayer. May participate in the regulation of osmotic pressure changes within the cell. This is Large-conductance mechanosensitive channel from Syntrophus aciditrophicus (strain SB).